A 92-amino-acid polypeptide reads, in one-letter code: PqqA binding protein (92 aa).

This sequence belongs to the PqqD family. In terms of assembly, monomer. Interacts with PqqE.

The protein operates within cofactor biosynthesis; pyrroloquinoline quinone biosynthesis. Functions as a PqqA binding protein and presents PqqA to PqqE, in the pyrroloquinoline quinone (PQQ) biosynthetic pathway. The sequence is that of PqqA binding protein from Pseudomonas paraeruginosa (strain DSM 24068 / PA7) (Pseudomonas aeruginosa (strain PA7)).